A 58-amino-acid polypeptide reads, in one-letter code: UPF0391 membrane protein COXBURSA331_A2131 (58 aa).

The next 2 helical transmembrane spans lie at 3–23 (FWVLIFFIIAVIAALFGFTGI) and 30–50 (IAKILFFIFLVLFVISLIAML).

The protein belongs to the UPF0391 family.

The protein localises to the cell membrane. The chain is UPF0391 membrane protein COXBURSA331_A2131 from Coxiella burnetii (strain RSA 331 / Henzerling II).